A 684-amino-acid chain; its full sequence is Divalent metal cation transporter MntH (684 aa).

The segment at 223–250 is disordered; the sequence is PTAINAPSGTPAAGRTSPTPTTDSQRRS. Helical transmembrane passes span 283–303, 318–340, 365–387, 391–413, 427–446, 467–489, 514–534, 555–577, 597–616, 621–643, and 656–678; these read TSLK…IAYV, FGYL…QYLS, LAYW…IGGA, RIMF…LLLL, VITA…FFVV, VLLA…HSGL, VGLA…VAAL, TLGA…ASSS, MLVR…TLGF, TLVL…LVKL, and HRAT…VMLI.

In the C-terminal section; belongs to the NRAMP family.

The protein resides in the cell membrane. In terms of biological role, h(+)-stimulated, divalent metal cation uptake system. This Mycobacterium bovis (strain ATCC BAA-935 / AF2122/97) protein is Divalent metal cation transporter MntH (mntH).